Consider the following 416-residue polypeptide: Serine hydroxymethyltransferase (416 aa).

(6S)-5,6,7,8-tetrahydrofolate-binding positions include leucine 118 and 122–124; that span reads GHL. Position 226 is an N6-(pyridoxal phosphate)lysine (lysine 226). Residues glutamate 242 and 350-352 each bind (6S)-5,6,7,8-tetrahydrofolate; that span reads SPF.

Belongs to the SHMT family. In terms of assembly, homodimer. Pyridoxal 5'-phosphate is required as a cofactor.

It is found in the cytoplasm. It carries out the reaction (6R)-5,10-methylene-5,6,7,8-tetrahydrofolate + glycine + H2O = (6S)-5,6,7,8-tetrahydrofolate + L-serine. Its pathway is one-carbon metabolism; tetrahydrofolate interconversion. It participates in amino-acid biosynthesis; glycine biosynthesis; glycine from L-serine: step 1/1. Catalyzes the reversible interconversion of serine and glycine with tetrahydrofolate (THF) serving as the one-carbon carrier. This reaction serves as the major source of one-carbon groups required for the biosynthesis of purines, thymidylate, methionine, and other important biomolecules. Also exhibits THF-independent aldolase activity toward beta-hydroxyamino acids, producing glycine and aldehydes, via a retro-aldol mechanism. This Wolinella succinogenes (strain ATCC 29543 / DSM 1740 / CCUG 13145 / JCM 31913 / LMG 7466 / NCTC 11488 / FDC 602W) (Vibrio succinogenes) protein is Serine hydroxymethyltransferase.